We begin with the raw amino-acid sequence, 326 residues long: Beta-ketoacyl-[acyl-carrier-protein] synthase III (326 aa).

Catalysis depends on residues C115 and H253. Residues 254–258 (QANKR) form an ACP-binding region. Residue N283 is part of the active site.

The protein belongs to the thiolase-like superfamily. FabH family. In terms of assembly, homodimer.

The protein localises to the cytoplasm. It catalyses the reaction malonyl-[ACP] + acetyl-CoA + H(+) = 3-oxobutanoyl-[ACP] + CO2 + CoA. The protein operates within lipid metabolism; fatty acid biosynthesis. Catalyzes the condensation reaction of fatty acid synthesis by the addition to an acyl acceptor of two carbons from malonyl-ACP. Catalyzes the first condensation reaction which initiates fatty acid synthesis and may therefore play a role in governing the total rate of fatty acid production. Possesses both acetoacetyl-ACP synthase and acetyl transacylase activities. Its substrate specificity determines the biosynthesis of branched-chain and/or straight-chain of fatty acids. This chain is Beta-ketoacyl-[acyl-carrier-protein] synthase III, found in Bradyrhizobium diazoefficiens (strain JCM 10833 / BCRC 13528 / IAM 13628 / NBRC 14792 / USDA 110).